Here is an 87-residue protein sequence, read N- to C-terminus: MKLSRRLTNMTNWDKEHALSEELRQLKDEFEDLMDDLARINKDLDFNIWERKDLEYRKASYETDIESIRLRINQKQNEMMEIIKNDK.

This is an uncharacterized protein from Ureaplasma parvum serovar 3 (strain ATCC 700970).